The sequence spans 501 residues: Cytochrome P450 monooxygenase esdpH (501 aa).

The chain crosses the membrane as a helical span at residues 5–22; the sequence is RVGILIIGVLATATFWLC. Cys446 lines the heme pocket.

It belongs to the cytochrome P450 family. The cofactor is heme.

It is found in the membrane. It participates in secondary metabolite biosynthesis; terpenoid biosynthesis. Its function is as follows. Cytochrome P450 monooxygenase; part of the cluster that mediates the biosynthesis of shearones, diterpenoid pyrones (DPs) which are structurally diverse meroterpenoids consisting of a diterpene linked by a pyrone, and which may exhibit a range of bioactivities. Whitin the pathway, esdpH takes part in the molecular scaffold modification via the hydroxylation at C-6' and can transform shearone C into shearone E, shearone D into shearone F, and shearone H into shearone I, the latter being the final product of the pathway. The molecular scaffold is commonly biosynthesized by a series of enzymes including the non-reducing polyketide synthase (NR-PKS) esdpA that generates an alpha-pyrone; the prenyltransferase esdpC that attaches a geranylgeranyl pyrophosphate (GGPP) produced by the GGPP synthase (GGPPS) esdpD onto the pyrone unit; the FAD-dependent monooxygenase esdpE that converts an olefin on the diterpene unit into an epoxide; and the terpene cyclase esdpB that catalyzes the cyclization reactions to give the molecular backbone shearone A. In the modification steps, esdpF oxidizes the hydroxy group to a ketone at C-3 and esdpG then attaches hydroxy groups at both C-11 and C-12. After that, esdpI hydroxylates at C-20 and esdpH hydroxylates at C-6'. The ether bridge is generated by nucleophilic attack of the hydroxy group at C-20 to the carbonyl carbon at C-3. EsdpH can also functions prior to esdpI. The different combinations of these modification enzymes lead to the production of diverse shearone derivatives, shearone I being the end product of the pathway. The alpha-ketoglutarate-dependent dioxygenase esdpJ seems not to be involved in this pathway. The sequence is that of Cytochrome P450 monooxygenase esdpH from Penicillium shearii (Eupenicillium shearii).